The primary structure comprises 426 residues: Serine--tRNA ligase (426 aa).

Position 233–235 (233–235) interacts with L-serine; the sequence is TAE. Residue 264-266 participates in ATP binding; it reads RAE. L-serine is bound at residue glutamate 287. 351–354 is a binding site for ATP; the sequence is EISS. Position 387 (serine 387) interacts with L-serine.

This sequence belongs to the class-II aminoacyl-tRNA synthetase family. Type-1 seryl-tRNA synthetase subfamily. As to quaternary structure, homodimer. The tRNA molecule binds across the dimer.

The protein localises to the cytoplasm. It catalyses the reaction tRNA(Ser) + L-serine + ATP = L-seryl-tRNA(Ser) + AMP + diphosphate + H(+). The enzyme catalyses tRNA(Sec) + L-serine + ATP = L-seryl-tRNA(Sec) + AMP + diphosphate + H(+). It functions in the pathway aminoacyl-tRNA biosynthesis; selenocysteinyl-tRNA(Sec) biosynthesis; L-seryl-tRNA(Sec) from L-serine and tRNA(Sec): step 1/1. Its function is as follows. Catalyzes the attachment of serine to tRNA(Ser). Is also able to aminoacylate tRNA(Sec) with serine, to form the misacylated tRNA L-seryl-tRNA(Sec), which will be further converted into selenocysteinyl-tRNA(Sec). The polypeptide is Serine--tRNA ligase (Clostridium kluyveri (strain NBRC 12016)).